Reading from the N-terminus, the 772-residue chain is Heat shock protein 88 (772 aa).

Disordered regions lie at residues 496–519 (TAAPAETPAETPANGEAAKPAEEK) and 729–772 (LGKP…DILD). The span at 497–513 (AAPAETPAETPANGEAA) shows a compositional bias: low complexity. A compositionally biased stretch (basic and acidic residues) spans 735–772 (KPVEVPKEEPKDTPMESKDAPAEEPVATKDQKMDDILD).

This sequence belongs to the heat shock protein 70 family.

In terms of biological role, may function in protein folding and assembly, and disassembly of protein complexes. The chain is Heat shock protein 88 (hspH) from Dictyostelium discoideum (Social amoeba).